The sequence spans 812 residues: DNA translocase FtsK 1 (812 aa).

Positions 1–11 are enriched in basic residues; the sequence is MTEKSHKKTAK. Residues 1-36 are disordered; sequence MTEKSHKKTAKGRAGSPSPTSARNKKADNGARGNKV. A compositionally biased stretch (basic and acidic residues) spans 25-36; it reads KKADNGARGNKV. The next 5 helical transmembrane spans lie at 63 to 83, 116 to 136, 156 to 176, 184 to 204, and 210 to 230; these read IGDA…ISLI, VGYY…CVVL, IAAA…YFVL, LPVG…AWLL, and LLII…ISWL. Topologically, residues 231-812 are cytoplasmic; that stretch reads EFLNGAGRAV…RKILAHKDHL (582 aa). Residues 461–670 enclose the FtsK domain; sequence GTPVVGDLAK…FTVQSKIDSR (210 aa). 481–486 is an ATP binding site; the sequence is GSGKSV.

This sequence belongs to the FtsK/SpoIIIE/SftA family. In terms of assembly, homohexamer. Forms a ring that surrounds DNA.

Its subcellular location is the cell inner membrane. In terms of biological role, essential cell division protein that coordinates cell division and chromosome segregation. The N-terminus is involved in assembly of the cell-division machinery. The C-terminus functions as a DNA motor that moves dsDNA in an ATP-dependent manner towards the dif recombination site, which is located within the replication terminus region. Translocation stops specifically at Xer-dif sites, where FtsK interacts with the Xer recombinase, allowing activation of chromosome unlinking by recombination. FtsK orienting polar sequences (KOPS) guide the direction of DNA translocation. FtsK can remove proteins from DNA as it translocates, but translocation stops specifically at XerCD-dif site, thereby preventing removal of XerC and XerD from dif. The sequence is that of DNA translocase FtsK 1 (ftsK1) from Neisseria meningitidis serogroup B (strain ATCC BAA-335 / MC58).